The chain runs to 164 residues: Large ribosomal subunit protein bL17 (164 aa).

Positions 127 to 164 (RARTDSVPARKGAGKKDASRVSGTVPDGQSQKIGKKKE) are disordered.

The protein belongs to the bacterial ribosomal protein bL17 family. In terms of assembly, part of the 50S ribosomal subunit. Contacts protein L32.

The protein is Large ribosomal subunit protein bL17 of Treponema pallidum (strain Nichols).